Here is a 256-residue protein sequence, read N- to C-terminus: 6-carboxyhexanoate--CoA ligase (256 aa).

Belongs to the BioW family. Homodimer. It depends on Mg(2+) as a cofactor.

It catalyses the reaction heptanedioate + ATP + CoA = 6-carboxyhexanoyl-CoA + AMP + diphosphate. Its pathway is metabolic intermediate metabolism; pimeloyl-CoA biosynthesis; pimeloyl-CoA from pimelate: step 1/1. Functionally, catalyzes the transformation of pimelate into pimeloyl-CoA with concomitant hydrolysis of ATP to AMP. The protein is 6-carboxyhexanoate--CoA ligase of Bacillus velezensis (strain DSM 23117 / BGSC 10A6 / LMG 26770 / FZB42) (Bacillus amyloliquefaciens subsp. plantarum).